A 206-amino-acid chain; its full sequence is A-type ATP synthase subunit E (206 aa).

This sequence belongs to the V-ATPase E subunit family. As to quaternary structure, has multiple subunits with at least A(3), B(3), C, D, E, F, H, I and proteolipid K(x).

It is found in the cell membrane. Its function is as follows. Component of the A-type ATP synthase that produces ATP from ADP in the presence of a proton gradient across the membrane. The polypeptide is A-type ATP synthase subunit E (Methanothermobacter thermautotrophicus (strain ATCC 29096 / DSM 1053 / JCM 10044 / NBRC 100330 / Delta H) (Methanobacterium thermoautotrophicum)).